We begin with the raw amino-acid sequence, 112 residues long: UPF0342 protein STH1710 (112 aa).

This sequence belongs to the UPF0342 family.

This Symbiobacterium thermophilum (strain DSM 24528 / JCM 14929 / IAM 14863 / T) protein is UPF0342 protein STH1710.